Consider the following 200-residue polypeptide: Gamma-glutamyl-CDP-amidate hydrolase (200 aa).

A Glutamine amidotransferase type-1 domain is found at 20–200 (ECLALDWGKL…LKEWFSLIKE (181 aa)). C101 (nucleophile) is an active-site residue. Catalysis depends on residues H178 and E180.

The catalysed reaction is N(5)-(cytidine 5'-diphosphoramidyl)-L-glutamine + H2O = cytidine 5'-diphosphoramidate + L-glutamate + H(+). The protein operates within capsule biogenesis; capsule polysaccharide biosynthesis. Functionally, involved in the biosynthesis of the O-methyl phosphoramidate (MeOPN) group found on the capsular polysaccharide (CPS) of C.jejuni. Catalyzes the hydrolysis of CDP-L-glutamine to L-glutamate and cytidine diphosphoramidate. This chain is Gamma-glutamyl-CDP-amidate hydrolase, found in Campylobacter jejuni subsp. jejuni serotype O:2 (strain ATCC 700819 / NCTC 11168).